Reading from the N-terminus, the 572-residue chain is Proline--tRNA ligase (572 aa).

It belongs to the class-II aminoacyl-tRNA synthetase family. ProS type 1 subfamily. Homodimer.

The protein resides in the cytoplasm. It carries out the reaction tRNA(Pro) + L-proline + ATP = L-prolyl-tRNA(Pro) + AMP + diphosphate. Catalyzes the attachment of proline to tRNA(Pro) in a two-step reaction: proline is first activated by ATP to form Pro-AMP and then transferred to the acceptor end of tRNA(Pro). As ProRS can inadvertently accommodate and process non-cognate amino acids such as alanine and cysteine, to avoid such errors it has two additional distinct editing activities against alanine. One activity is designated as 'pretransfer' editing and involves the tRNA(Pro)-independent hydrolysis of activated Ala-AMP. The other activity is designated 'posttransfer' editing and involves deacylation of mischarged Ala-tRNA(Pro). The misacylated Cys-tRNA(Pro) is not edited by ProRS. The protein is Proline--tRNA ligase of Escherichia coli (strain K12 / MC4100 / BW2952).